The following is a 183-amino-acid chain: Ribosome-recycling factor (183 aa).

Belongs to the RRF family.

The protein resides in the cytoplasm. In terms of biological role, responsible for the release of ribosomes from messenger RNA at the termination of protein biosynthesis. May increase the efficiency of translation by recycling ribosomes from one round of translation to another. The protein is Ribosome-recycling factor of Deinococcus deserti (strain DSM 17065 / CIP 109153 / LMG 22923 / VCD115).